Consider the following 152-residue polypeptide: Ninjurin-1 (152 aa).

At Met-1 the chain carries N-acetylmethionine. Residues 1 to 10 (MDPGTEEYEL) are compositionally biased toward acidic residues. Residues 1–30 (MDPGTEEYELNGDLRPGSPGSPDASPPRWG) form a disordered region. Topologically, residues 1–78 (MDPGTEEYEL…EQGNEFAFFV (78 aa)) are extracellular. Positions 16 to 27 (PGSPGSPDASPP) are enriched in low complexity. Residues Ser-18, Ser-21, and Ser-25 each carry the phosphoserine modification. Residues 26 to 37 (PPRWGLRNRPIN) form an N-terminal adhesion motif region. The segment at 40-69 (HYANKKSAAESMLDIALLMANASQLKAVVE) is required to induce plasma membrane rupture. The interval 44 to 55 (KKSAAESMLDIA) is helix alpha1. The tract at residues 58-74 (MANASQLKAVVEQGNEF) is helix alpha2. The N-linked (GlcNAc...) asparagine glycan is linked to Asn-60. The helical transmembrane segment at 79–103 (PLVVLISISLVLQIGVGVLLIFLVK) threads the bilayer. Residues 104–113 (YDLNNPAKHA) lie on the Cytoplasmic side of the membrane. A helical transmembrane segment spans residues 114-138 (KLDFLNNLATGLVFIIVVVNIFITA). The Extracellular segment spans residues 139–152 (FGVQKPVMDVAPRQ).

It belongs to the ninjurin family. In terms of assembly, homodimer; in absence of death stimuli, forms an inactive homodimer. Homooligomer; in response to death stimuli, homooligomerizes into long, highly branched filaments and large, ring-shaped structures in the membrane. The topology shown in the entry corresponds to the activated form. In terms of processing, cleaved by MMP9 protease to generate the Secreted ninjurin-1 form. N-linked glycosylation is required for homooligomerization.

Its subcellular location is the cell membrane. It localises to the synaptic cell membrane. The protein localises to the secreted. Its activity is regulated as follows. In response to death stimuli, homooligomerizes and disrupts membrane integrity by introducing the hydrophilic faces of alpha1 and alpha2 helices into the hydrophobic membrane. Homooligomerization and ability to mediate plasma membrane rupture is inhibited by glycine; it is unclear whether glycine directly or indirectly inhibits homooligomerization. In normal conditions, NINJ1 is autoinhibited via formation of a homodimer: in the inactive homodimer, the alpha1 and alpha2 helices (residues 44-74) form a single transmembrane region without a kink, in which hydrophilic faces of alpha1 and alpha2 helices are sequestered. Functionally, effector of various programmed cell death, such as pyroptosis and necroptosis, which mediates plasma membrane rupture (cytolysis). Oligomerizes in response to death stimuli and forms ring-like structures on the plasma membrane: acts by cutting and shedding membrane disks, like a cookie cutter, leading to membrane damage and loss that cannot be repaired by the cell. Plasma membrane rupture leads to release intracellular molecules named damage-associated molecular patterns (DAMPs) that propagate the inflammatory response. Mechanistically, mediates plasma membrane rupture by introducing hydrophilic faces of 2 alpha helices into the hydrophobic membrane. Induces plasma membrane rupture downstream of Gasdermin (GSDMA, GSDMB, GSDMC, GSDMD, or GSDME) or MLKL during pyroptosis or necroptosis, respectively. Acts as an effector of PANoptosis downstream of CASP1, CASP4, CASP8 and RIPK3. Also induces plasma membrane rupture in response to cell swelling caused by osmotic stress and ferroptosis downstream of lipid peroxidation. Acts as a regulator of Toll-like receptor 4 (TLR4) signaling triggered by lipopolysaccharide (LPS) during systemic inflammation; directly binds LPS. Involved in leukocyte migration during inflammation by promoting transendothelial migration of macrophages via homotypic binding. Promotes the migration of monocytes across the brain endothelium to central nervous system inflammatory lesions. Also acts as a homophilic transmembrane adhesion molecule involved in various processes such as axonal growth, cell chemotaxis and angiogenesis. Promotes cell adhesion by mediating homophilic interactions via its extracellular N-terminal adhesion motif (N-NAM). Involved in the progression of the inflammatory stress by promoting cell-to-cell interactions between immune cells and endothelial cells. Plays a role in nerve regeneration by promoting maturation of Schwann cells. Acts as a regulator of angiogenesis. Promotes the formation of new vessels by mediating the interaction between capillary pericyte cells and endothelial cells. Promotes osteoclasts development by enhancing the survival of prefusion osteoclasts. Also involved in striated muscle growth and differentiation. In terms of biological role, secreted form generated by cleavage, which has chemotactic activity. Acts as an anti-inflammatory mediator by promoting monocyte recruitment, thereby ameliorating atherosclerosis. This Rattus norvegicus (Rat) protein is Ninjurin-1.